Here is a 707-residue protein sequence, read N- to C-terminus: Polyribonucleotide nucleotidyltransferase (707 aa).

Residues aspartate 486 and aspartate 492 each coordinate Mg(2+). A KH domain is found at 553–612 (PRIHKIKINPEKIKDVIGKGGSVIRMLTEETGTIIEIEDDGTIKISATIGEKAKNAIRRI). Residues 622 to 690 (GRIYSGKVTR…RQGRLRLSIK (69 aa)) form the S1 motif domain.

The protein belongs to the polyribonucleotide nucleotidyltransferase family. As to quaternary structure, component of the RNA degradosome, which is a multiprotein complex involved in RNA processing and mRNA degradation. Requires Mg(2+) as cofactor.

It is found in the cytoplasm. The enzyme catalyses RNA(n+1) + phosphate = RNA(n) + a ribonucleoside 5'-diphosphate. In terms of biological role, involved in mRNA degradation. Catalyzes the phosphorolysis of single-stranded polyribonucleotides processively in the 3'- to 5'-direction. The sequence is that of Polyribonucleotide nucleotidyltransferase from Buchnera aphidicola subsp. Schizaphis graminum (strain Sg).